Consider the following 148-residue polypeptide: Macrodomain Ter protein (148 aa).

The protein belongs to the MatP family. As to quaternary structure, homodimer.

The protein resides in the cytoplasm. In terms of biological role, required for spatial organization of the terminus region of the chromosome (Ter macrodomain) during the cell cycle. Prevents early segregation of duplicated Ter macrodomains during cell division. Binds specifically to matS, which is a 13 bp signature motif repeated within the Ter macrodomain. The sequence is that of Macrodomain Ter protein from Haemophilus influenzae (strain 86-028NP).